We begin with the raw amino-acid sequence, 313 residues long: tRNA dimethylallyltransferase (313 aa).

Residue 10-17 coordinates ATP; sequence GPTASGKT. 12 to 17 contacts substrate; it reads TASGKT. 3 interaction with substrate tRNA regions span residues 35-38, 159-163, and 240-245; these read DSAM, QRIQR, and RCVGYR.

Belongs to the IPP transferase family. Monomer. Mg(2+) serves as cofactor.

It catalyses the reaction adenosine(37) in tRNA + dimethylallyl diphosphate = N(6)-dimethylallyladenosine(37) in tRNA + diphosphate. Its function is as follows. Catalyzes the transfer of a dimethylallyl group onto the adenine at position 37 in tRNAs that read codons beginning with uridine, leading to the formation of N6-(dimethylallyl)adenosine (i(6)A). This is tRNA dimethylallyltransferase from Legionella pneumophila (strain Paris).